Reading from the N-terminus, the 476-residue chain is Bifunctional protein HldE (476 aa).

The tract at residues 1–319 (MKVSLPAFEK…EALALHHGES (319 aa)) is ribokinase. Residue 195–198 (NMSE) coordinates ATP. The active site involves D264. Residues 345-476 (MTNGCFDILH…AIIQNIMAKQ (132 aa)) form a cytidylyltransferase region.

This sequence in the N-terminal section; belongs to the carbohydrate kinase PfkB family. In the C-terminal section; belongs to the cytidylyltransferase family. In terms of assembly, homodimer.

The catalysed reaction is D-glycero-beta-D-manno-heptose 7-phosphate + ATP = D-glycero-beta-D-manno-heptose 1,7-bisphosphate + ADP + H(+). It carries out the reaction D-glycero-beta-D-manno-heptose 1-phosphate + ATP + H(+) = ADP-D-glycero-beta-D-manno-heptose + diphosphate. Its pathway is nucleotide-sugar biosynthesis; ADP-L-glycero-beta-D-manno-heptose biosynthesis; ADP-L-glycero-beta-D-manno-heptose from D-glycero-beta-D-manno-heptose 7-phosphate: step 1/4. It participates in nucleotide-sugar biosynthesis; ADP-L-glycero-beta-D-manno-heptose biosynthesis; ADP-L-glycero-beta-D-manno-heptose from D-glycero-beta-D-manno-heptose 7-phosphate: step 3/4. Catalyzes the phosphorylation of D-glycero-D-manno-heptose 7-phosphate at the C-1 position to selectively form D-glycero-beta-D-manno-heptose-1,7-bisphosphate. In terms of biological role, catalyzes the ADP transfer from ATP to D-glycero-beta-D-manno-heptose 1-phosphate, yielding ADP-D-glycero-beta-D-manno-heptose. This is Bifunctional protein HldE from Shewanella sp. (strain ANA-3).